Consider the following 357-residue polypeptide: UDP-N-acetylglucosamine--N-acetylmuramyl-(pentapeptide) pyrophosphoryl-undecaprenol N-acetylglucosamine transferase (357 aa).

Residues 15–17 (TGG), Asn-124, Arg-165, Ser-194, and Gln-288 contribute to the UDP-N-acetyl-alpha-D-glucosamine site.

This sequence belongs to the glycosyltransferase 28 family. MurG subfamily.

The protein resides in the cell inner membrane. The enzyme catalyses di-trans,octa-cis-undecaprenyl diphospho-N-acetyl-alpha-D-muramoyl-L-alanyl-D-glutamyl-meso-2,6-diaminopimeloyl-D-alanyl-D-alanine + UDP-N-acetyl-alpha-D-glucosamine = di-trans,octa-cis-undecaprenyl diphospho-[N-acetyl-alpha-D-glucosaminyl-(1-&gt;4)]-N-acetyl-alpha-D-muramoyl-L-alanyl-D-glutamyl-meso-2,6-diaminopimeloyl-D-alanyl-D-alanine + UDP + H(+). Its pathway is cell wall biogenesis; peptidoglycan biosynthesis. In terms of biological role, cell wall formation. Catalyzes the transfer of a GlcNAc subunit on undecaprenyl-pyrophosphoryl-MurNAc-pentapeptide (lipid intermediate I) to form undecaprenyl-pyrophosphoryl-MurNAc-(pentapeptide)GlcNAc (lipid intermediate II). This is UDP-N-acetylglucosamine--N-acetylmuramyl-(pentapeptide) pyrophosphoryl-undecaprenol N-acetylglucosamine transferase from Nostoc punctiforme (strain ATCC 29133 / PCC 73102).